Reading from the N-terminus, the 213-residue chain is MPTTGPPPPLPGDRPLPSSFDNDEDFYNENGFQKIARKLKQEPLVPLGCVLTVAAFTGAYRAMRAGDHGRVNRMFRYRIAAQGFTILAMVAGGIYYSDDRHKEREMWKAKRDADEEEKRLKWIKELEARDEEDKLAKEIMDKRRQRAAAAAAKREGRAVEDKAAEGGAAAAQDAKSSSGLSWASAPGWFGGNKNEPDANAQTNTGDAEKPSEK.

Positions methionine 1–arginine 14 are enriched in pro residues. The segment at methionine 1 to aspartate 23 is disordered. Residues leucine 16–tryptophan 107 form the HIG1 domain. 2 helical membrane-spanning segments follow: residues leucine 44 to methionine 63 and phenylalanine 75 to serine 97. The stretch at arginine 100–alanine 149 forms a coiled coil. The tract at residues lysine 142 to lysine 213 is disordered. Residues alanine 152–alanine 164 are compositionally biased toward basic and acidic residues. The span at glutamate 165 to lysine 175 shows a compositional bias: low complexity.

Belongs to the RCF1 family. As to quaternary structure, associates with the respiratory chain complex III/complex IV supercomplex.

Its subcellular location is the mitochondrion membrane. Its function is as follows. Cytochrome c oxidase subunit which plays a role in assembly of respiratory supercomplexes. The protein is Respiratory supercomplex factor 1, mitochondrial (RCF1) of Pyricularia oryzae (strain 70-15 / ATCC MYA-4617 / FGSC 8958) (Rice blast fungus).